Here is a 714-residue protein sequence, read N- to C-terminus: Testis-expressed protein 13D (714 aa).

2 disordered regions span residues Gly300–Asp419 and Arg431–Phe675. 2 stretches are compositionally biased toward basic and acidic residues: residues Ser307–Gln320 and Gly366–Lys378. Residues Arg379–His392 show a composition bias toward basic residues. The segment covering Thr403–Gly416 has biased composition (polar residues). 3 stretches are compositionally biased toward basic and acidic residues: residues Cys495–Gln505, Cys557–Gln567, and Ser636–Lys646. The segment at Val677–Pro706 adopts a RanBP2-type zinc-finger fold.

Belongs to the TEX13 family.

This chain is Testis-expressed protein 13D, found in Homo sapiens (Human).